The sequence spans 274 residues: 3-methyl-2-oxobutanoate hydroxymethyltransferase (274 aa).

2 residues coordinate Mg(2+): Asp-49 and Asp-88. Residues 49–50 (DS), Asp-88, and Lys-118 contribute to the 3-methyl-2-oxobutanoate site. Residue Glu-120 participates in Mg(2+) binding. Residue Glu-187 is the Proton acceptor of the active site.

The protein belongs to the PanB family. Homodecamer; pentamer of dimers. The cofactor is Mg(2+).

It localises to the cytoplasm. The enzyme catalyses 3-methyl-2-oxobutanoate + (6R)-5,10-methylene-5,6,7,8-tetrahydrofolate + H2O = 2-dehydropantoate + (6S)-5,6,7,8-tetrahydrofolate. It functions in the pathway cofactor biosynthesis; (R)-pantothenate biosynthesis; (R)-pantoate from 3-methyl-2-oxobutanoate: step 1/2. Catalyzes the reversible reaction in which hydroxymethyl group from 5,10-methylenetetrahydrofolate is transferred onto alpha-ketoisovalerate to form ketopantoate. This is 3-methyl-2-oxobutanoate hydroxymethyltransferase from Rhodopseudomonas palustris (strain BisB5).